The primary structure comprises 259 residues: Protein GrpE (259 aa).

Disordered stretches follow at residues 1-75 and 227-259; these read MNSD…KGSD and GPGP…KDEN. A compositionally biased stretch (low complexity) spans 20-40; the sequence is NNPSENFVSSSNSNESVNQVE. Residues 46 to 60 show a composition bias toward basic and acidic residues; sequence EVEHQVKNDSVDTAK. Over residues 61–73 the composition is skewed to polar residues; sequence EQSSTSCESNIKG.

It belongs to the GrpE family. Homodimer.

It is found in the cytoplasm. Its function is as follows. Participates actively in the response to hyperosmotic and heat shock by preventing the aggregation of stress-denatured proteins, in association with DnaK and GrpE. It is the nucleotide exchange factor for DnaK and may function as a thermosensor. Unfolded proteins bind initially to DnaJ; upon interaction with the DnaJ-bound protein, DnaK hydrolyzes its bound ATP, resulting in the formation of a stable complex. GrpE releases ADP from DnaK; ATP binding to DnaK triggers the release of the substrate protein, thus completing the reaction cycle. Several rounds of ATP-dependent interactions between DnaJ, DnaK and GrpE are required for fully efficient folding. This chain is Protein GrpE, found in Prochlorococcus marinus (strain NATL1A).